The primary structure comprises 547 residues: Chaperonin GroEL (547 aa).

Residues 30 to 33 (TLGP), lysine 51, 87 to 91 (DGTTT), glycine 415, and aspartate 495 each bind ATP.

The protein belongs to the chaperonin (HSP60) family. In terms of assembly, forms a cylinder of 14 subunits composed of two heptameric rings stacked back-to-back. Interacts with the co-chaperonin GroES.

It localises to the cytoplasm. It carries out the reaction ATP + H2O + a folded polypeptide = ADP + phosphate + an unfolded polypeptide.. Functionally, together with its co-chaperonin GroES, plays an essential role in assisting protein folding. The GroEL-GroES system forms a nano-cage that allows encapsulation of the non-native substrate proteins and provides a physical environment optimized to promote and accelerate protein folding. The polypeptide is Chaperonin GroEL (Allorhizobium ampelinum (strain ATCC BAA-846 / DSM 112012 / S4) (Agrobacterium vitis (strain S4))).